Here is a 1538-residue protein sequence, read N- to C-terminus: Arf-GAP with Rho-GAP domain, ANK repeat and PH domain-containing protein 3 (1538 aa).

Positions 4–68 constitute an SAM domain; the sequence is PQDLDIAVWL…LRLLRAGSAE (65 aa). Disordered stretches follow at residues 72–97, 125–149, and 215–242; these read DSHL…PVPK, SRNS…SVPN, and ASDR…EDAG. The span at 82–97 shows a compositional bias: pro residues; that stretch reads TPSPAPDAQPPKPVPK. Basic and acidic residues predominate over residues 216–241; sequence SDRRDGRGVCQERAEHRQDLETREDA. 2 PH domains span residues 282–374 and 389–478; these read VPLL…SCLK and RPLR…EAVT. In terms of domain architecture, Arf-GAP spans 479–606; it reads ETLSDYEVAE…LFRKPHPRHP (128 aa). 2 consecutive PH domains span residues 671–785 and 795–901; these read ATYR…FSPL and LLRM…AGGG. The region spanning 903 to 1084 is the Rho-GAP domain; the sequence is TGLQEQQMSR…ELIDGYISVF (182 aa). Residues 1113–1206 enclose the Ras-associating domain; it reads GDLIMEVYIE…ASLLLRKVSM (94 aa). The PH 5 domain maps to 1219-1321; that stretch reads ESPRVGLLRC…WTTSILKAQH (103 aa). T1344 carries the post-translational modification Phosphothreonine. A phosphotyrosine mark is found at Y1399 and Y1404. Positions 1425–1439 are enriched in polar residues; it reads WSAKSDPSLTSQRSF. The tract at residues 1425 to 1538 is disordered; sequence WSAKSDPSLT…SNPPSSQPLT (114 aa). Phosphoserine is present on residues S1438 and S1474. 2 stretches are compositionally biased toward low complexity: residues 1476-1486 and 1494-1505; these read EEQLLQELNNL and ASCPESSSQPTS. The span at 1506–1529 shows a compositional bias: pro residues; sequence PQAPSPTSLPTPTPSLPTQPPCTS.

As to quaternary structure, interacts (via SAM domain) with INPPL1/SHIP2. Post-translationally, tyrosine phosphorylated at a low basal level. PDGF treatment stimulates phosphorylation. Tyrosine phosphorylation is increased in cells that are in the process of becoming attached to a substrate and that start spreading and flattening.

It localises to the cytoplasm. Its subcellular location is the cell membrane. The protein resides in the cytoskeleton. It is found in the cell projection. The protein localises to the lamellipodium. It localises to the ruffle. In terms of biological role, phosphatidylinositol 3,4,5-trisphosphate-dependent GTPase-activating protein that modulates actin cytoskeleton remodeling by regulating ARF and RHO family members. Is activated by phosphatidylinositol 3,4,5-trisphosphate (PtdIns(3,4,5)P3) binding. Can be activated by phosphatidylinositol 3,4-bisphosphate (PtdIns(3,4,5)P2) binding, albeit with lower efficiency. Acts preferentially on ARF5 and on RHOA. This is Arf-GAP with Rho-GAP domain, ANK repeat and PH domain-containing protein 3 (Arap3) from Mus musculus (Mouse).